Reading from the N-terminus, the 341-residue chain is Glycerol-3-phosphate dehydrogenase [NAD(P)+] (341 aa).

4 residues coordinate NADPH: Ser-14, Phe-15, Arg-35, and Lys-108. Sn-glycerol 3-phosphate-binding residues include Lys-108 and Gly-136. Ser-140 is an NADPH binding site. Residues Lys-191, Asp-244, Ser-254, Arg-255, and Asn-256 each coordinate sn-glycerol 3-phosphate. The active-site Proton acceptor is the Lys-191. Arg-255 is an NADPH binding site. Residues Val-279 and Glu-281 each coordinate NADPH.

Belongs to the NAD-dependent glycerol-3-phosphate dehydrogenase family.

It localises to the cytoplasm. The catalysed reaction is sn-glycerol 3-phosphate + NAD(+) = dihydroxyacetone phosphate + NADH + H(+). The enzyme catalyses sn-glycerol 3-phosphate + NADP(+) = dihydroxyacetone phosphate + NADPH + H(+). It functions in the pathway membrane lipid metabolism; glycerophospholipid metabolism. In terms of biological role, catalyzes the reduction of the glycolytic intermediate dihydroxyacetone phosphate (DHAP) to sn-glycerol 3-phosphate (G3P), the key precursor for phospholipid synthesis. The protein is Glycerol-3-phosphate dehydrogenase [NAD(P)+] of Pseudomonas putida (strain GB-1).